Consider the following 32-residue polypeptide: Beta-1,4-galactosyltransferase 1 (32 aa).

Belongs to the glycosyltransferase 7 family. Mn(2+) is required as a cofactor. Post-translationally, the soluble form derives from the membrane form by proteolytic processing.

Its subcellular location is the golgi apparatus. It is found in the golgi stack membrane. The protein localises to the secreted. It localises to the cell membrane. The protein resides in the cell projection. Its subcellular location is the filopodium. It catalyses the reaction D-glucose + UDP-alpha-D-galactose = lactose + UDP + H(+). The catalysed reaction is an N-acetyl-beta-D-glucosaminyl derivative + UDP-alpha-D-galactose = a beta-D-galactosyl-(1-&gt;4)-N-acetyl-beta-D-glucosaminyl derivative + UDP + H(+). The enzyme catalyses N-acetyl-D-glucosamine + UDP-alpha-D-galactose = beta-D-galactosyl-(1-&gt;4)-N-acetyl-D-glucosamine + UDP + H(+). It carries out the reaction a beta-D-GlcNAc-(1-&gt;3)-beta-D-Gal-(1-&gt;4)-beta-D-Glc-(1&lt;-&gt;1)-Cer(d18:1(4E)) + UDP-alpha-D-galactose = a neolactoside nLc4Cer(d18:1(4E)) + UDP + H(+). It catalyses the reaction a beta-D-glucosylceramide + UDP-alpha-D-galactose = a beta-D-galactosyl-(1-&gt;4)-beta-D-glucosyl-(1&lt;-&gt;1)-ceramide + UDP + H(+). The catalysed reaction is a neolactoside IV(3)-beta-GlcNAc-nLc4Cer + UDP-alpha-D-galactose = a neolactoside nLc6Cer + UDP + H(+). It participates in protein modification; protein glycosylation. Its function is as follows. This protein is responsible for the synthesis of complex-type N-linked oligosaccharides in many glycoproteins as well as the carbohydrate moieties of glycolipids. The sequence is that of Beta-1,4-galactosyltransferase 1 from Rattus norvegicus (Rat).